Reading from the N-terminus, the 158-residue chain is Putative gene 52 protein (158 aa).

In Bacillus subtilis (Bacteriophage SP01), this protein is Putative gene 52 protein (52).